An 883-amino-acid polypeptide reads, in one-letter code: DNA mismatch repair protein MutS (883 aa).

ATP is bound at residue 602–609 (GPNMSGKS).

The protein belongs to the DNA mismatch repair MutS family.

Its function is as follows. This protein is involved in the repair of mismatches in DNA. It is possible that it carries out the mismatch recognition step. This protein has a weak ATPase activity. This chain is DNA mismatch repair protein MutS, found in Staphylococcus haemolyticus (strain JCSC1435).